The chain runs to 397 residues: Bifunctional enzyme IspD/IspF (397 aa).

The 2-C-methyl-D-erythritol 4-phosphate cytidylyltransferase stretch occupies residues M1–I236. The segment at R237 to K397 is 2-C-methyl-D-erythritol 2,4-cyclodiphosphate synthase. Residues D243 and H245 each coordinate a divalent metal cation. Residues D243–H245 and H269–S270 each bind 4-CDP-2-C-methyl-D-erythritol 2-phosphate. H277 lines the a divalent metal cation pocket. 4-CDP-2-C-methyl-D-erythritol 2-phosphate contacts are provided by residues D291–G293, T367–E370, F374, and R377.

It in the N-terminal section; belongs to the IspD/TarI cytidylyltransferase family. IspD subfamily. In the C-terminal section; belongs to the IspF family. Requires a divalent metal cation as cofactor.

The catalysed reaction is 2-C-methyl-D-erythritol 4-phosphate + CTP + H(+) = 4-CDP-2-C-methyl-D-erythritol + diphosphate. It catalyses the reaction 4-CDP-2-C-methyl-D-erythritol 2-phosphate = 2-C-methyl-D-erythritol 2,4-cyclic diphosphate + CMP. The protein operates within isoprenoid biosynthesis; isopentenyl diphosphate biosynthesis via DXP pathway; isopentenyl diphosphate from 1-deoxy-D-xylulose 5-phosphate: step 2/6. It functions in the pathway isoprenoid biosynthesis; isopentenyl diphosphate biosynthesis via DXP pathway; isopentenyl diphosphate from 1-deoxy-D-xylulose 5-phosphate: step 4/6. Bifunctional enzyme that catalyzes the formation of 4-diphosphocytidyl-2-C-methyl-D-erythritol from CTP and 2-C-methyl-D-erythritol 4-phosphate (MEP) (IspD), and catalyzes the conversion of 4-diphosphocytidyl-2-C-methyl-D-erythritol 2-phosphate (CDP-ME2P) to 2-C-methyl-D-erythritol 2,4-cyclodiphosphate (ME-CPP) with a corresponding release of cytidine 5-monophosphate (CMP) (IspF). This Bartonella henselae (strain ATCC 49882 / DSM 28221 / CCUG 30454 / Houston 1) (Rochalimaea henselae) protein is Bifunctional enzyme IspD/IspF.